Consider the following 505-residue polypeptide: Glycerol kinase (505 aa).

Thr-14 is a binding site for ADP. ATP contacts are provided by Thr-14, Thr-15, and Ser-16. Thr-14 lines the sn-glycerol 3-phosphate pocket. Arg-18 contacts ADP. Arg-84, Glu-85, Tyr-136, and Asp-246 together coordinate sn-glycerol 3-phosphate. Glycerol-binding residues include Arg-84, Glu-85, Tyr-136, Asp-246, and Gln-247. ADP-binding residues include Thr-268 and Gly-311. ATP is bound by residues Thr-268, Gly-311, Gln-315, and Gly-412. Residues Gly-412 and Asn-416 each contribute to the ADP site.

This sequence belongs to the FGGY kinase family.

The enzyme catalyses glycerol + ATP = sn-glycerol 3-phosphate + ADP + H(+). It participates in polyol metabolism; glycerol degradation via glycerol kinase pathway; sn-glycerol 3-phosphate from glycerol: step 1/1. With respect to regulation, inhibited by fructose 1,6-bisphosphate (FBP). Key enzyme in the regulation of glycerol uptake and metabolism. Catalyzes the phosphorylation of glycerol to yield sn-glycerol 3-phosphate. The protein is Glycerol kinase of Vibrio cholerae serotype O1 (strain M66-2).